A 34-amino-acid polypeptide reads, in one-letter code: Peptidoglycan hydrolase P7 (34 aa).

A helical transmembrane segment spans residues 10–26 (VLITLGVLAAVNKVSAL).

Its subcellular location is the virion membrane. Functionally, exolysin that catalyzes the cleavage of the host peptidoglycans during virus entry. The protein is Peptidoglycan hydrolase P7 (VII) of Pseudoalteromonas espejiana (Bacteriophage PM2).